The primary structure comprises 222 residues: Putative N-acetylmannosamine-6-phosphate 2-epimerase (222 aa).

This sequence belongs to the NanE family.

The catalysed reaction is an N-acyl-D-glucosamine 6-phosphate = an N-acyl-D-mannosamine 6-phosphate. It participates in amino-sugar metabolism; N-acetylneuraminate degradation; D-fructose 6-phosphate from N-acetylneuraminate: step 3/5. Its function is as follows. Converts N-acetylmannosamine-6-phosphate (ManNAc-6-P) to N-acetylglucosamine-6-phosphate (GlcNAc-6-P). In Oceanobacillus iheyensis (strain DSM 14371 / CIP 107618 / JCM 11309 / KCTC 3954 / HTE831), this protein is Putative N-acetylmannosamine-6-phosphate 2-epimerase.